The chain runs to 166 residues: Phosphopantetheine adenylyltransferase (166 aa).

A substrate-binding site is contributed by Ser-9. ATP-binding positions include 9 to 10 (SY) and His-17. The substrate site is built by Lys-41, Ile-75, and Lys-89. Residues 90–92 (GLR), Glu-100, and 124–130 (LEHISSS) each bind ATP.

This sequence belongs to the bacterial CoaD family. Homohexamer. Mg(2+) serves as cofactor.

Its subcellular location is the cytoplasm. The enzyme catalyses (R)-4'-phosphopantetheine + ATP + H(+) = 3'-dephospho-CoA + diphosphate. The protein operates within cofactor biosynthesis; coenzyme A biosynthesis; CoA from (R)-pantothenate: step 4/5. In terms of biological role, reversibly transfers an adenylyl group from ATP to 4'-phosphopantetheine, yielding dephospho-CoA (dPCoA) and pyrophosphate. The chain is Phosphopantetheine adenylyltransferase from Bifidobacterium longum (strain DJO10A).